A 1017-amino-acid polypeptide reads, in one-letter code: Rho-GTPase-activating protein LRG1 (1017 aa).

An N-acetylmethionine modification is found at Met1. LIM zinc-binding domains are found at residues 28-88 (CARC…LCQY) and 98-148 (CHVC…CKYH). An LIM zinc-binding 3; truncated domain is found at 155–184 (KRCKGCEFPISDQYIEFPKGEEIHCWHPEC). Residues 419–474 (CAGCNKYIQEECIQFYEHRWHIACFTCSSCHKNINPRSLTDPTFNKEKKKILCSHC) form the LIM zinc-binding 4 domain. At Ser562 the chain carries Phosphoserine. The tract at residues 570 to 602 (TDLNDPTKQGDSKNLVIQTDDPSSSQQVSTREN) is disordered. Residues 584-602 (LVIQTDDPSSSQQVSTREN) show a composition bias toward polar residues. Residues 730–953 (APLDVLCEKW…YLITHNEEMA (224 aa)) enclose the Rho-GAP domain.

Interacts with CDC42, RHO1 and RHO2.

The protein resides in the cytoplasm. The protein localises to the bud. It localises to the bud neck. In terms of biological role, acts in signal transduction. Activates CDC42, RHO1 and RHO2. Negatively regulates 1,3-beta-glucan synthesis. May be responsible for the down-regulation of CDC42 during mating. This Saccharomyces cerevisiae (strain ATCC 204508 / S288c) (Baker's yeast) protein is Rho-GTPase-activating protein LRG1 (LRG1).